Consider the following 317-residue polypeptide: Transaldolase (317 aa).

K132 functions as the Schiff-base intermediate with substrate in the catalytic mechanism.

The protein belongs to the transaldolase family. Type 1 subfamily. As to quaternary structure, homodimer.

The protein localises to the cytoplasm. It carries out the reaction D-sedoheptulose 7-phosphate + D-glyceraldehyde 3-phosphate = D-erythrose 4-phosphate + beta-D-fructose 6-phosphate. Its pathway is carbohydrate degradation; pentose phosphate pathway; D-glyceraldehyde 3-phosphate and beta-D-fructose 6-phosphate from D-ribose 5-phosphate and D-xylulose 5-phosphate (non-oxidative stage): step 2/3. Its function is as follows. Transaldolase is important for the balance of metabolites in the pentose-phosphate pathway. The polypeptide is Transaldolase (Yersinia pseudotuberculosis serotype O:3 (strain YPIII)).